Reading from the N-terminus, the 218-residue chain is Thiopurine S-methyltransferase (218 aa).

Residues Trp10, Leu45, Glu66, and Arg123 each coordinate S-adenosyl-L-methionine.

This sequence belongs to the class I-like SAM-binding methyltransferase superfamily. TPMT family.

The protein localises to the cytoplasm. The enzyme catalyses S-adenosyl-L-methionine + a thiopurine = S-adenosyl-L-homocysteine + a thiopurine S-methylether.. The protein is Thiopurine S-methyltransferase of Shewanella baltica (strain OS155 / ATCC BAA-1091).